A 197-amino-acid polypeptide reads, in one-letter code: dCTP deaminase (197 aa).

DCTP contacts are provided by residues 110–115, aspartate 128, 136–138, tyrosine 171, and glutamine 182; these read RSSLAR and VLE. Residue glutamate 138 is the Proton donor/acceptor of the active site.

The protein belongs to the dCTP deaminase family. Homotrimer.

It carries out the reaction dCTP + H2O + H(+) = dUTP + NH4(+). The protein operates within pyrimidine metabolism; dUMP biosynthesis; dUMP from dCTP (dUTP route): step 1/2. Its function is as follows. Catalyzes the deamination of dCTP to dUTP. This Alteromonas mediterranea (strain DSM 17117 / CIP 110805 / LMG 28347 / Deep ecotype) protein is dCTP deaminase.